A 475-amino-acid polypeptide reads, in one-letter code: 3-isopropylmalate dehydratase large subunit (475 aa).

Positions 347, 407, and 410 each coordinate [4Fe-4S] cluster. Residues 418–442 form a disordered region; it reads LAPGERSASTSNRNFEGRQGKGGRT.

Belongs to the aconitase/IPM isomerase family. LeuC type 1 subfamily. As to quaternary structure, heterodimer of LeuC and LeuD. Requires [4Fe-4S] cluster as cofactor.

It catalyses the reaction (2R,3S)-3-isopropylmalate = (2S)-2-isopropylmalate. It functions in the pathway amino-acid biosynthesis; L-leucine biosynthesis; L-leucine from 3-methyl-2-oxobutanoate: step 2/4. Functionally, catalyzes the isomerization between 2-isopropylmalate and 3-isopropylmalate, via the formation of 2-isopropylmaleate. This Streptomyces griseus subsp. griseus (strain JCM 4626 / CBS 651.72 / NBRC 13350 / KCC S-0626 / ISP 5235) protein is 3-isopropylmalate dehydratase large subunit.